The sequence spans 1139 residues: Solute carrier family 12 member 5 (1139 aa).

2 disordered regions span residues Met1–Tyr63 and Thr92–Gln116. Over Met1–Ser98 the chain is Cytoplasmic. Positions Pro19–Pro45 are enriched in basic and acidic residues. The segment covering Lys46–Thr55 has biased composition (polar residues). A Phosphothreonine modification is found at Thr57. Residues Ser98–Lys111 show a composition bias toward basic and acidic residues. A discontinuously helical transmembrane segment spans residues Arg99–Met120. Position 113 (Lys113) interacts with K(+). At Gly121–Pro129 the chain is on the extracellular side. Residues Cys130–Gly151 traverse the membrane as a helical segment. The Cytoplasmic portion of the chain corresponds to Ile152 to Ser174. A helical transmembrane segment spans residues Ala175–Val203. Residue Ala184 coordinates chloride. The Extracellular portion of the chain corresponds to Gly204 to Tyr229. 2 consecutive transmembrane segments (helical) span residues Leu230 to Leu250 and Asn251 to Asn276. Over Lys277–Leu402 the chain is Extracellular. A disulfide bond links Cys310 and Cys325. 4 N-linked (GlcNAc...) asparagine glycosylation sites follow: Asn314, Asn333, Asn351, and Asn362. Cysteines 345 and 354 form a disulfide. Residues Ala403–Thr420 form a helical membrane-spanning segment. Met410 is a K(+) binding site. Positions 414 and 415 each coordinate chloride. Topologically, residues Ser421–Ile429 are cytoplasmic. A helical transmembrane segment spans residues Tyr430–Ser453. Residue Asp446 coordinates K(+). The Extracellular portion of the chain corresponds to Ile454–Leu485. A helical membrane pass occupies residues Arg486–Gly513. At Ser514 to Gln534 the chain is on the cytoplasmic side. A run of 2 helical transmembrane segments spans residues Ala535–Gly555 and Glu556–Asp578. Glu569 lines the chloride pocket. At Glu579–Tyr592 the chain is on the cytoplasmic side. Transmembrane regions (helical) follow at residues Met593 to Arg615 and Tyr616 to Leu632. The Cytoplasmic segment spans residues Met633–Ser1139. Residues Gly667–Leu681 are scissor helix. The residue at position 929 (Thr929) is a Phosphothreonine; by OXSR1 and STK39. Residues Met942–Ile1052 are disordered. Residues Thr945–Gly962 are compositionally biased toward basic and acidic residues. Acidic residues predominate over residues Thr982 to Val994. Over residues Pro1003 to Pro1012 the composition is skewed to low complexity. Basic and acidic residues predominate over residues Asp1023 to Lys1042. Thr1030 is modified (phosphothreonine; by OXSR1 and STK39). Phosphoserine is present on residues Ser1045, Ser1048, and Ser1049.

This sequence belongs to the SLC12A transporter family. K/Cl co-transporter subfamily. In terms of assembly, homodimer; adopts a domain-swap conformation at the scissor helices connecting the transmembrane domain and C-terminal domain. Heterodimer with K-Cl cotransporters SLC12A6 and SLC12A7. Interacts with AP2A1. In terms of processing, phosphorylated at Thr-929 and Thr-1030 by OXSR1/OSR1 and STK39/SPAK downstream of WNK kinases (WNK1, WNK2, WNK3 or WNK4), inhibiting the potassium-chloride cotransport activity. In terms of tissue distribution, brain specific. Detected in neuronal cells.

It is found in the cell membrane. It localises to the cell projection. Its subcellular location is the dendrite. It catalyses the reaction K(+)(in) + chloride(in) = K(+)(out) + chloride(out). Its activity is regulated as follows. Inhibited following phosphorylation by OXSR1/OSR1 and STK39/SPAK: phosphorylation takes place downstream of WNK kinases (WNK1, WNK2, WNK3 or WNK4) in response to hyperosmotic stress and subsequent cell shrinkage. Functionally, mediates electroneutral potassium-chloride cotransport in mature neurons and is required for neuronal Cl(-) homeostasis. As major extruder of intracellular chloride, it establishes the low neuronal Cl(-) levels required for chloride influx after binding of GABA-A and glycine to their receptors, with subsequent hyperpolarization and neuronal inhibition. Involved in the regulation of dendritic spine formation and maturation. The chain is Solute carrier family 12 member 5 from Homo sapiens (Human).